We begin with the raw amino-acid sequence, 300 residues long: Cation-efflux pump FieF (300 aa).

The chain crosses the membrane as a helical span at residues 24 to 44 (LLIKIFAWWYTGSVSILAALV). Aspartate 45 and aspartate 49 together coordinate Zn(2+). 2 helical membrane-spanning segments follow: residues 82–102 (AALAQSMFISGSALFLFLTGI) and 114–134 (AGVGVVVTLIALFSTLALVTF). Zn(2+) is bound by residues histidine 153 and aspartate 157. 2 consecutive transmembrane segments (helical) span residues 156-176 (SDVMMNGAILVALGLSWYGWH) and 178-198 (ADALFALGIGIYILYSALRMG).

This sequence belongs to the cation diffusion facilitator (CDF) transporter (TC 2.A.4) family. FieF subfamily. As to quaternary structure, homodimer.

It localises to the cell inner membrane. The catalysed reaction is Zn(2+)(in) + H(+)(out) = Zn(2+)(out) + H(+)(in). It catalyses the reaction Cd(2+)(in) + H(+)(out) = Cd(2+)(out) + H(+)(in). It carries out the reaction Fe(2+)(in) + H(+)(out) = Fe(2+)(out) + H(+)(in). Its function is as follows. Divalent metal cation transporter which exports Zn(2+), Cd(2+) and possibly Fe(2+). May be involved in zinc and iron detoxification by efflux. In Klebsiella pneumoniae (strain 342), this protein is Cation-efflux pump FieF.